The following is a 586-amino-acid chain: Dual specificity tyrosine-phosphorylation-regulated kinase 3 (586 aa).

The segment covering 1–13 (MGGAARERGRKDA) has biased composition (basic and acidic residues). The disordered stretch occupies residues 1-187 (MGGAARERGR…QGVIGGPNNG (187 aa)). The Protein kinase domain occupies 208-521 (YEVLKIIGKG…PAQALRHPWI (314 aa)). Residues 214–222 (IGKGSFGQV), Lys237, and 287–290 (FELL) each bind ATP. Asp334 (proton acceptor) is an active-site residue. Tyr368 carries the phosphotyrosine modification. A Nuclear localization signal motif is present at residues 467-480 (RSRRGKKRGPPGSK).

It belongs to the protein kinase superfamily. CMGC Ser/Thr protein kinase family. MNB/DYRK subfamily. As to quaternary structure, interacts with SIRT1. Mg(2+) serves as cofactor. Protein kinase activity is activated following autophosphorylation at Tyr-368. In terms of processing, ubiquitinated at anaphase by the anaphase-promoting complex (APC/C), leading to its degradation by the proteasome. Expressed predominantly in testis. Expressed in late pachytene spermatocytes.

It is found in the nucleus. The protein localises to the cytoplasm. It localises to the nucleus speckle. Its subcellular location is the cytoplasmic granule. The protein resides in the cytoskeleton. It is found in the microtubule organizing center. The protein localises to the centrosome. It carries out the reaction L-seryl-[protein] + ATP = O-phospho-L-seryl-[protein] + ADP + H(+). The enzyme catalyses L-threonyl-[protein] + ATP = O-phospho-L-threonyl-[protein] + ADP + H(+). It catalyses the reaction L-tyrosyl-[protein] + ATP = O-phospho-L-tyrosyl-[protein] + ADP + H(+). Its activity is regulated as follows. Protein kinase activity is activated following autophosphorylation at Tyr-368. In terms of biological role, dual-specificity protein kinase that promotes disassembly of several types of membraneless organelles during mitosis, such as stress granules, nuclear speckles and pericentriolar material. Dual-specificity tyrosine-regulated kinases (DYRKs) autophosphorylate a critical tyrosine residue in their activation loop and phosphorylate their substrate on serine and threonine residues. Acts as a central dissolvase of membraneless organelles during the G2-to-M transition, after the nuclear-envelope breakdown: acts by mediating phosphorylation of multiple serine and threonine residues in unstructured domains of proteins, such as SRRM1 and PCM1. Does not mediate disassembly of all membraneless organelles: disassembly of P-body and nucleolus is not regulated by DYRK3. Dissolution of membraneless organelles at the onset of mitosis is also required to release mitotic regulators, such as ZNF207, from liquid-unmixed organelles where they are sequestered and keep them dissolved during mitosis. Regulates mTORC1 by mediating the dissolution of stress granules: during stressful conditions, DYRK3 partitions from the cytosol to the stress granule, together with mTORC1 components, which prevents mTORC1 signaling. When stress signals are gone, the kinase activity of DYRK3 is required for the dissolution of stress granule and mTORC1 relocation to the cytosol: acts by mediating the phosphorylation of the mTORC1 inhibitor AKT1S1, allowing full reactivation of mTORC1 signaling. Also acts as a negative regulator of EPO-dependent erythropoiesis: may place an upper limit on red cell production during stress erythropoiesis. Inhibits cell death due to cytokine withdrawal in hematopoietic progenitor cells. Promotes cell survival upon genotoxic stress through phosphorylation of SIRT1: this in turn inhibits p53/TP53 activity and apoptosis. This is Dual specificity tyrosine-phosphorylation-regulated kinase 3 from Rattus norvegicus (Rat).